Consider the following 907-residue polypeptide: Lipoxygenase 1, chloroplastic (907 aa).

Residues 1-49 (MALAKQIMGASLMDQKTSVFGSNLCLNHVLVNKHRLRLRKTRKNGSMVV) constitute a chloroplast transit peptide. The 125-residue stretch at 85 to 209 (DFFKDTIFRK…DLPNPRIFFT (125 aa)) folds into the PLAT domain. A Lipoxygenase domain is found at 212–907 (PYLPDETPVG…CRGVPNSISI (696 aa)). His-567, His-572, His-758, Asn-762, and Ile-907 together coordinate Fe cation.

The protein belongs to the lipoxygenase family. The cofactor is Fe cation. Confined to glandular trichomes in flowers, and, at low levels, in leaves.

It localises to the plastid. The protein localises to the chloroplast. The enzyme catalyses (9Z,12Z,15Z)-octadecatrienoate + O2 = 13-hydroperoxy-(9Z,11E,15Z)-octadecatrienoate. The protein operates within lipid metabolism; oxylipin biosynthesis. It functions in the pathway isoprenoid biosynthesis. Component of the monoterpenoid pyrethrins biosynthesis; pyrethrins are widely used plant-derived pesticide. Plant lipoxygenases may be involved in a number of diverse aspects of plant physiology including growth and development, pest resistance, and senescence or responses to wounding. Catalyzes the hydroperoxidation of lipids containing a cis,cis-1,4-pentadiene structure. Mediates the peroxidation of linolenic acid leading to the production of 13-hydroperoxylinolenic acid. The chain is Lipoxygenase 1, chloroplastic from Tanacetum cinerariifolium (Dalmatian daisy).